The sequence spans 291 residues: 4-diphosphocytidyl-2-C-methyl-D-erythritol kinase (291 aa).

Lys-14 is an active-site residue. 96 to 106 (PFGAGLGGGSS) lines the ATP pocket. Asp-138 is an active-site residue.

It belongs to the GHMP kinase family. IspE subfamily.

It carries out the reaction 4-CDP-2-C-methyl-D-erythritol + ATP = 4-CDP-2-C-methyl-D-erythritol 2-phosphate + ADP + H(+). It functions in the pathway isoprenoid biosynthesis; isopentenyl diphosphate biosynthesis via DXP pathway; isopentenyl diphosphate from 1-deoxy-D-xylulose 5-phosphate: step 3/6. Its function is as follows. Catalyzes the phosphorylation of the position 2 hydroxy group of 4-diphosphocytidyl-2C-methyl-D-erythritol. In Chlorobium phaeovibrioides (strain DSM 265 / 1930) (Prosthecochloris vibrioformis (strain DSM 265)), this protein is 4-diphosphocytidyl-2-C-methyl-D-erythritol kinase.